Reading from the N-terminus, the 175-residue chain is Probable RNA-binding protein EIF1AD (175 aa).

The region spanning 5 to 89 is the S1-like domain; sequence TKKRYITNKV…VKGEIEYILD (85 aa). Over residues 116-128 the composition is skewed to basic and acidic residues; sequence EAKRGQTSDKMID. A disordered region spans residues 116 to 175; the sequence is EAKRGQTSDKMIDDDMLPPSESEEEDESEGEETYDEDDVDDEEEEEFDTYNPNRMQAPSK. Over residues 129–163 the composition is skewed to acidic residues; that stretch reads DDMLPPSESEEEDESEGEETYDEDDVDDEEEEEFD. Residues 165-175 show a composition bias toward polar residues; that stretch reads YNPNRMQAPSK.

The protein belongs to the EIF1AD family.

This Caenorhabditis elegans protein is Probable RNA-binding protein EIF1AD.